The following is a 159-amino-acid chain: 2-C-methyl-D-erythritol 2,4-cyclodiphosphate synthase (159 aa).

The a divalent metal cation site is built by Asp-10 and His-12. 4-CDP-2-C-methyl-D-erythritol 2-phosphate-binding positions include 10 to 12 (DVH) and 37 to 38 (HS). His-45 provides a ligand contact to a divalent metal cation. 4-CDP-2-C-methyl-D-erythritol 2-phosphate is bound by residues 59 to 61 (DIG), 64 to 68 (FPDTD), 103 to 109 (AQAPKML), 135 to 138 (TTTE), Phe-142, and Arg-145.

This sequence belongs to the IspF family. As to quaternary structure, homotrimer. It depends on a divalent metal cation as a cofactor.

The catalysed reaction is 4-CDP-2-C-methyl-D-erythritol 2-phosphate = 2-C-methyl-D-erythritol 2,4-cyclic diphosphate + CMP. It participates in isoprenoid biosynthesis; isopentenyl diphosphate biosynthesis via DXP pathway; isopentenyl diphosphate from 1-deoxy-D-xylulose 5-phosphate: step 4/6. Involved in the biosynthesis of isopentenyl diphosphate (IPP) and dimethylallyl diphosphate (DMAPP), two major building blocks of isoprenoid compounds. Catalyzes the conversion of 4-diphosphocytidyl-2-C-methyl-D-erythritol 2-phosphate (CDP-ME2P) to 2-C-methyl-D-erythritol 2,4-cyclodiphosphate (ME-CPP) with a corresponding release of cytidine 5-monophosphate (CMP). The protein is 2-C-methyl-D-erythritol 2,4-cyclodiphosphate synthase of Francisella philomiragia subsp. philomiragia (strain ATCC 25017 / CCUG 19701 / FSC 153 / O#319-036).